The primary structure comprises 478 residues: tRNA modification GTPase MnmE (478 aa).

Positions 25, 82, and 135 each coordinate (6S)-5-formyl-5,6,7,8-tetrahydrofolate. Positions 231-400 constitute a TrmE-type G domain; that stretch reads GIKVVIAGQP…LREQLLRVVG (170 aa). Asn-241 serves as a coordination point for K(+). Residues 241-246, 260-266, and 285-288 contribute to the GTP site; these read NVGKSS, TPVAGTT, and DTAG. Ser-245 contributes to the Mg(2+) binding site. K(+) contacts are provided by Thr-260, Val-262, and Thr-265. Thr-266 is a Mg(2+) binding site. Lys-478 serves as a coordination point for (6S)-5-formyl-5,6,7,8-tetrahydrofolate.

It belongs to the TRAFAC class TrmE-Era-EngA-EngB-Septin-like GTPase superfamily. TrmE GTPase family. In terms of assembly, homodimer. Heterotetramer of two MnmE and two MnmG subunits. It depends on K(+) as a cofactor.

The protein localises to the cytoplasm. Its function is as follows. Exhibits a very high intrinsic GTPase hydrolysis rate. Involved in the addition of a carboxymethylaminomethyl (cmnm) group at the wobble position (U34) of certain tRNAs, forming tRNA-cmnm(5)s(2)U34. The chain is tRNA modification GTPase MnmE from Polaromonas naphthalenivorans (strain CJ2).